A 210-amino-acid polypeptide reads, in one-letter code: Redox-sensing transcriptional repressor Rex (210 aa).

The H-T-H motif DNA-binding region spans 16 to 55 (IYMRTLQELLEDDVDVISSERLAKQCGVNPAQIRKDLAYF). 90 to 95 (GLGNLG) serves as a coordination point for NAD(+).

Belongs to the transcriptional regulatory Rex family. Homodimer.

It localises to the cytoplasm. Modulates transcription in response to changes in cellular NADH/NAD(+) redox state. The chain is Redox-sensing transcriptional repressor Rex from Syntrophobacter fumaroxidans (strain DSM 10017 / MPOB).